Reading from the N-terminus, the 73-residue chain is Putative sodium channel toxin Ts39 (73 aa).

A signal peptide spans 1-22 (MKTLNFCLFLVIISSLTVRVFC). The LCN-type CS-alpha/beta domain maps to 24–73 (NDRFLTVNDNYVICLYINKSFVNCENLCKAYMNAKDGFCRQPHCFCTDVE). Intrachain disulfides connect Cys-37–Cys-62, Cys-47–Cys-67, and Cys-51–Cys-69.

Belongs to the long (3 C-C) scorpion toxin superfamily. Sodium channel inhibitor family. In terms of tissue distribution, expressed by the venom gland.

Its subcellular location is the secreted. Its function is as follows. Putative sodium channel toxin. The chain is Putative sodium channel toxin Ts39 from Tityus serrulatus (Brazilian scorpion).